Reading from the N-terminus, the 678-residue chain is DNA ligase (678 aa).

NAD(+)-binding positions include 35–39 (DEEYD), 84–85 (SL), and Glu-115. The active-site N6-AMP-lysine intermediate is the Lys-117. Positions 138, 172, 288, and 312 each coordinate NAD(+). Positions 406, 409, 425, and 430 each coordinate Zn(2+). The BRCT domain maps to 589-678 (VQSKILSNLT…IKNLRQQKLF (90 aa)).

The protein belongs to the NAD-dependent DNA ligase family. LigA subfamily. Mg(2+) serves as cofactor. Mn(2+) is required as a cofactor.

It catalyses the reaction NAD(+) + (deoxyribonucleotide)n-3'-hydroxyl + 5'-phospho-(deoxyribonucleotide)m = (deoxyribonucleotide)n+m + AMP + beta-nicotinamide D-nucleotide.. DNA ligase that catalyzes the formation of phosphodiester linkages between 5'-phosphoryl and 3'-hydroxyl groups in double-stranded DNA using NAD as a coenzyme and as the energy source for the reaction. It is essential for DNA replication and repair of damaged DNA. The sequence is that of DNA ligase from Pseudothermotoga lettingae (strain ATCC BAA-301 / DSM 14385 / NBRC 107922 / TMO) (Thermotoga lettingae).